Here is a 285-residue protein sequence, read N- to C-terminus: Energy-coupling factor transporter ATP-binding protein EcfA3 (285 aa).

In terms of domain architecture, ABC transporter spans 6–242 (LKVEELNYNY…KEVIRKVNLR (237 aa)). 39–46 (GGNGVGKS) contacts ATP.

It belongs to the ABC transporter superfamily. Energy-coupling factor EcfA family. In terms of assembly, forms a stable energy-coupling factor (ECF) transporter complex composed of 2 membrane-embedded substrate-binding proteins (S component), 2 ATP-binding proteins (A component) and 2 transmembrane proteins (T component).

Its subcellular location is the cell membrane. In terms of biological role, ATP-binding (A) component of a common energy-coupling factor (ECF) ABC-transporter complex. Unlike classic ABC transporters this ECF transporter provides the energy necessary to transport a number of different substrates. In Clostridium perfringens (strain ATCC 13124 / DSM 756 / JCM 1290 / NCIMB 6125 / NCTC 8237 / Type A), this protein is Energy-coupling factor transporter ATP-binding protein EcfA3.